We begin with the raw amino-acid sequence, 532 residues long: UDP-glucuronosyltransferase 1A4 (532 aa).

Positions 1–27 (MVLGVWITLWRLVRLLLLLCVLPWAEG) are cleaved as a signal peptide. N-linked (GlcNAc...) asparagine glycans are attached at residues Asn141 and Asn295. The helical transmembrane segment at 490 to 506 (VIGFLLAIVLTVAFVTF) threads the bilayer.

The protein belongs to the UDP-glycosyltransferase family. In terms of assembly, homodimers. Homooligomer. Interacts with UGT1A1, UGT1A3, UGT1A6, UGT1A7, UGT1A8, UGT1A9 and UGT1A10 to form heterodimers.

The protein localises to the endoplasmic reticulum membrane. It catalyses the reaction glucuronate acceptor + UDP-alpha-D-glucuronate = acceptor beta-D-glucuronoside + UDP + H(+). The enzyme catalyses calcidiol + UDP-alpha-D-glucuronate = calcidiol 25-O-(beta-D-glucuronide) + UDP + H(+). It carries out the reaction calcidiol + UDP-alpha-D-glucuronate = calcidiol 3-O-(beta-D-glucuronide) + UDP + H(+). The catalysed reaction is calcitriol + UDP-alpha-D-glucuronate = calcitriol 25-O-(beta-D-glucuronide) + UDP + H(+). It catalyses the reaction (5Z,8Z,11Z,14Z)-eicosatetraenoate + UDP-alpha-D-glucuronate = O-[(5Z),(8Z),(11Z),(14Z)-eicosatetraenoyl]-beta-D-glucuronate + UDP. The enzyme catalyses 15-hydroxy-(5Z,8Z,11Z,13E)-eicosatetraenoate + UDP-alpha-D-glucuronate = 15-O-(beta-D-glucuronosyl)-(5Z,8Z,11Z,14Z)-eicosatetraenoate + UDP + H(+). It carries out the reaction 20-hydroxy-(5Z,8Z,11Z,14Z)-eicosatetraenoate + UDP-alpha-D-glucuronate = 20-O-(beta-D-glucuronosyl)-(5Z,8Z,11Z,14Z)-eicosatetraenoate + UDP + H(+). In terms of biological role, UDP-glucuronosyltransferase (UGT) that catalyzes phase II biotransformation reactions in which lipophilic substrates are conjugated with glucuronic acid to increase the metabolite's water solubility, thereby facilitating excretion into either the urine or bile. Essential for the elimination and detoxification of drugs, xenobiotics and endogenous compounds. Involved in the glucuronidation of calcidiol, which is the major circulating form of vitamin D3 essential for the regulation of calcium and phosphate homeostasis. Also glucuronidates the biologically active form of vitamin D3, calcitriol, probably leading to its biliary transport and intestinal reabsorption. Involved in the glucuronidation of arachidonic acid (AA) and AA-derived eicosanoids including 15-HETE, 20-HETE and PGB1. This is UDP-glucuronosyltransferase 1A4 (Ugt1a4) from Oryctolagus cuniculus (Rabbit).